A 464-amino-acid chain; its full sequence is 3-isopropylmalate dehydratase large subunit (464 aa).

3 residues coordinate [4Fe-4S] cluster: Cys337, Cys397, and Cys400.

This sequence belongs to the aconitase/IPM isomerase family. LeuC type 1 subfamily. In terms of assembly, heterodimer of LeuC and LeuD. The cofactor is [4Fe-4S] cluster.

The catalysed reaction is (2R,3S)-3-isopropylmalate = (2S)-2-isopropylmalate. The protein operates within amino-acid biosynthesis; L-leucine biosynthesis; L-leucine from 3-methyl-2-oxobutanoate: step 2/4. Its function is as follows. Catalyzes the isomerization between 2-isopropylmalate and 3-isopropylmalate, via the formation of 2-isopropylmaleate. The chain is 3-isopropylmalate dehydratase large subunit from Bacillus cytotoxicus (strain DSM 22905 / CIP 110041 / 391-98 / NVH 391-98).